The primary structure comprises 339 residues: Anthranilate phosphoribosyltransferase (339 aa).

5-phospho-alpha-D-ribose 1-diphosphate contacts are provided by residues Gly-81, 84-85 (GD), Ser-89, 91-94 (NVSS), 109-117 (KHGNRALSS), and Ala-121. Gly-81 serves as a coordination point for anthranilate. Position 93 (Ser-93) interacts with Mg(2+). Asn-112 lines the anthranilate pocket. Anthranilate is bound at residue Arg-167. 2 residues coordinate Mg(2+): Asp-225 and Glu-226.

This sequence belongs to the anthranilate phosphoribosyltransferase family. In terms of assembly, homodimer. Mg(2+) serves as cofactor.

The enzyme catalyses N-(5-phospho-beta-D-ribosyl)anthranilate + diphosphate = 5-phospho-alpha-D-ribose 1-diphosphate + anthranilate. It functions in the pathway amino-acid biosynthesis; L-tryptophan biosynthesis; L-tryptophan from chorismate: step 2/5. In terms of biological role, catalyzes the transfer of the phosphoribosyl group of 5-phosphorylribose-1-pyrophosphate (PRPP) to anthranilate to yield N-(5'-phosphoribosyl)-anthranilate (PRA). This Brucella abortus (strain S19) protein is Anthranilate phosphoribosyltransferase.